The sequence spans 475 residues: Glutamate--tRNA ligase 2 (475 aa).

Positions 11-21 (PSPTGFLHIGG) match the 'HIGH' region motif. Over residues 116–133 (AEGRPPRYDGTWRDKDPA) the composition is skewed to basic and acidic residues. Residues 116–137 (AEGRPPRYDGTWRDKDPAEAPS) form a disordered region. A 'KMSKS' region motif is present at residues 240 to 244 (KLSKR). ATP is bound at residue Lys-243.

This sequence belongs to the class-I aminoacyl-tRNA synthetase family. Glutamate--tRNA ligase type 1 subfamily. Monomer.

The protein localises to the cytoplasm. It carries out the reaction tRNA(Glu) + L-glutamate + ATP = L-glutamyl-tRNA(Glu) + AMP + diphosphate. Functionally, catalyzes the attachment of glutamate to tRNA(Glu) in a two-step reaction: glutamate is first activated by ATP to form Glu-AMP and then transferred to the acceptor end of tRNA(Glu). The chain is Glutamate--tRNA ligase 2 from Chelativorans sp. (strain BNC1).